We begin with the raw amino-acid sequence, 619 residues long: Dihydroxy-acid dehydratase (619 aa).

D81 serves as a coordination point for Mg(2+). C122 provides a ligand contact to [2Fe-2S] cluster. D123 and K124 together coordinate Mg(2+). At K124 the chain carries N6-carboxylysine. C195 is a binding site for [2Fe-2S] cluster. Residue E494 coordinates Mg(2+). S520 acts as the Proton acceptor in catalysis.

This sequence belongs to the IlvD/Edd family. In terms of assembly, homodimer. The cofactor is [2Fe-2S] cluster. Mg(2+) serves as cofactor.

It catalyses the reaction (2R)-2,3-dihydroxy-3-methylbutanoate = 3-methyl-2-oxobutanoate + H2O. The catalysed reaction is (2R,3R)-2,3-dihydroxy-3-methylpentanoate = (S)-3-methyl-2-oxopentanoate + H2O. It participates in amino-acid biosynthesis; L-isoleucine biosynthesis; L-isoleucine from 2-oxobutanoate: step 3/4. Its pathway is amino-acid biosynthesis; L-valine biosynthesis; L-valine from pyruvate: step 3/4. In terms of biological role, functions in the biosynthesis of branched-chain amino acids. Catalyzes the dehydration of (2R,3R)-2,3-dihydroxy-3-methylpentanoate (2,3-dihydroxy-3-methylvalerate) into 2-oxo-3-methylpentanoate (2-oxo-3-methylvalerate) and of (2R)-2,3-dihydroxy-3-methylbutanoate (2,3-dihydroxyisovalerate) into 2-oxo-3-methylbutanoate (2-oxoisovalerate), the penultimate precursor to L-isoleucine and L-valine, respectively. The chain is Dihydroxy-acid dehydratase from Shewanella denitrificans (strain OS217 / ATCC BAA-1090 / DSM 15013).